The following is a 520-amino-acid chain: Cytochrome P450 monooxygenase oblB (520 aa).

A run of 3 helical transmembrane segments spans residues 17–37 (VAVISAGAFYLLNLVIYRLFL), 229–249 (LFMGLPWLIHVVRLIPVSILA), and 320–340 (IGTGTITTAGSLCFICYHIVV). Residue Cys462 participates in heme binding.

The protein belongs to the cytochrome P450 family. Requires heme as cofactor.

Its subcellular location is the membrane. It functions in the pathway secondary metabolite biosynthesis; terpenoid biosynthesis. Functionally, cytochrome P450 monooxygenase; part of the gene cluster that mediates the biosynthesis of the sesterterpenes ophiobolins, fungal phytotoxins with potential anti-cancer activities. The first step of the pathway is performed by the sesterterpene synthase oblA that possesses both prenyl transferase and terpene cyclase activity, converting isopentenyl diphosphate and dimethylallyl diphosphate into geranylfarnesyl diphosphate (GFPP) and further converting GFPP into ophiobolin F, respectively. Other sesterterpenoids (C(25) terpenoids) are found as minor products of oblA. It is expected that ophiobolin F is then oxidized to ophiobolin A via ophiobolin C and ophiobolin B intermediates by the combined action of the cytochrome P450 monooxygenase oblB and the FAD-dependent oxidoreductase oblC. Although oblB catalyzes multistep oxygenations at C5 and C21/C7 in a relatively efficient manner, it is unable to convert ophiobolin F to ophiobolin C and produces instead several unexpected derivatives. The protein is Cytochrome P450 monooxygenase oblB of Aspergillus clavatus (strain ATCC 1007 / CBS 513.65 / DSM 816 / NCTC 3887 / NRRL 1 / QM 1276 / 107).